A 124-amino-acid chain; its full sequence is Fluoride-specific ion channel FluC (124 aa).

The next 4 membrane-spanning stretches (helical) occupy residues 4-24 (LIFV…ISIF), 35-55 (FGTL…YALG), 62-82 (PEIK…FSTF), and 102-122 (IALN…LVFS). Na(+) is bound by residues G74 and T77.

This sequence belongs to the fluoride channel Fluc/FEX (TC 1.A.43) family.

Its subcellular location is the cell inner membrane. It carries out the reaction fluoride(in) = fluoride(out). Na(+) is not transported, but it plays an essential structural role and its presence is essential for fluoride channel function. Functionally, fluoride-specific ion channel. Important for reducing fluoride concentration in the cell, thus reducing its toxicity. This Shewanella loihica (strain ATCC BAA-1088 / PV-4) protein is Fluoride-specific ion channel FluC.